The primary structure comprises 1024 residues: Non-canonical nonribosomal peptide synthetase FrzA (1024 aa).

Residues 29 to 425 (RAQKSHQAIA…GRRDHQVKVR (397 aa)) are adenylation (A) domain. The Carrier domain maps to 534–611 (NASQDVRSAL…ALTSIIKQRL (78 aa)). Ser571 carries the post-translational modification O-(pantetheine 4'-phosphoryl)serine. Positions 655 to 898 (LTGGTGFVGA…VPVDYVNAAI (244 aa)) constitute a Thioester reductase (TE) domain.

The protein belongs to the NRP synthetase family. It depends on pantetheine 4'-phosphate as a cofactor.

The catalysed reaction is L-tyrosinal + AMP + diphosphate + NADP(+) = L-tyrosine + ATP + NADPH + H(+). Its pathway is secondary metabolite biosynthesis. Non-canonical nonribosomal peptide synthetase; part of the gene cluster that mediates the biosynthesis of the alkaloid (-)-FR901483, a potent immunosuppressant that shows efficacy in animal models and a probable inhibitor of purine nucleotide biosynthesis by targeting phosphoribosylpyrophosphate amidotransferase (PPAT). Within the pathway, FrzA catalyzes the reduction of L-tyrosine via its C-terminal reductase domain to produce L-tyrosinal. The biosynthesis of (-)-FR901483 starts with the condensation of two L-tyrosines to yield (S,S)-dityrosyl-piperazine. This process occurs in 3 steps with the non-canonical nonribosomal peptide synthetase FrzA catalyzing the reduction of L-tyrosine into L-tyrosinal, the spontaneous condensation of 2 L-tyrosinal units, and the subsequent reduction by the NmrA-like family domain-containing oxidoreductase FrzB. The cytochrome P450 monooxygenase FrzC then performs coupling between N10 and C1' to morph the piperazine into a 1,4-diazabicyclo[3.2.1]octane spiro-fused to a 2,5-cyclohexadienone. The dienone portion is further reduced to cyclohexanone by the flavin-dependent reductase FrzD. The methyltranserases (MTs) FrzE and FrzF are then involved in the methylation at the C10' amine and the C4 phenolic oxygen, respectively. The order of the two MTs appear to be interchangeable. Cleavage of the C9-N10' bond by the dioxygenase FrzG then leads to formation of a conjugated iminium. In addition to the oxidation of C9, an additional dehydrogenation between C7 and C8 can occur to give a likely shunt product. The next biosynthetic step is the intramolecular aldol condensation catalyzed by the newly identified aldolase FrzH to yield an aza-tricyclic product with the formation of a C9-C3' bond. The short-chain dehydrogenase/reductase FrzI then produces dephospho-(-)-FR901483 that is phosphorylated at C4'-OH into (-)-FR901483 by the phosphotransferase FrzJ. This is Non-canonical nonribosomal peptide synthetase FrzA from Cladobotryum sp.